Here is a 567-residue protein sequence, read N- to C-terminus: Structural protein ORF567 (567 aa).

The disordered stretch occupies residues 7-393 (INALLGFPEE…MPIEHKPEQQ (387 aa)). The span at 65–79 (TPTPIRPAPPPPPPI) shows a compositional bias: pro residues. The span at 180 to 200 (PKREPEHHTHGSTNNEHESKR) shows a compositional bias: basic and acidic residues. The span at 219–231 (THQTSPSHSSGGT) shows a compositional bias: low complexity. Pro residues-rich tracts occupy residues 253–278 (MPIPPNPPIVREPTPTPQPTPIPTPP) and 285–299 (TPTPPRTPQPTPPPT). The segment covering 300–312 (HGSSSTNSSGSTN) has biased composition (low complexity). Residues 319–335 (PKPIPIPPTPPPPPPHH) are compositionally biased toward pro residues. The segment covering 343–353 (PKHESEHHDHG) has biased composition (basic and acidic residues). The segment covering 354–372 (SSSTNSSSSTSNSSSGGTN) has biased composition (low complexity).

The protein localises to the virion. The polypeptide is Structural protein ORF567 (Acidianus two-tailed virus (ATV)).